Consider the following 498-residue polypeptide: Lysine--tRNA ligase (498 aa).

Residues E401 and E408 each contribute to the Mg(2+) site.

Belongs to the class-II aminoacyl-tRNA synthetase family. In terms of assembly, homodimer. The cofactor is Mg(2+).

It localises to the cytoplasm. It carries out the reaction tRNA(Lys) + L-lysine + ATP = L-lysyl-tRNA(Lys) + AMP + diphosphate. The polypeptide is Lysine--tRNA ligase (Dehalococcoides mccartyi (strain ATCC BAA-2266 / KCTC 15142 / 195) (Dehalococcoides ethenogenes (strain 195))).